A 172-amino-acid chain; its full sequence is Transcriptional repressor NrdR (172 aa).

A zinc finger spans residues 3–34 (CPFCRHPDSRVVDSRTTDDGTSIRRRRQCPDC). In terms of domain architecture, ATP-cone spans 46 to 136 (LMVIKRSGVT…VYRAFDSLED (91 aa)). The segment at 152 to 172 (ERSGGGTCGTGTVPVPAGTAD) is disordered. The span at 161 to 172 (TGTVPVPAGTAD) shows a compositional bias: low complexity.

It belongs to the NrdR family. Zn(2+) serves as cofactor.

Functionally, negatively regulates transcription of bacterial ribonucleotide reductase nrd genes and operons by binding to NrdR-boxes. This is Transcriptional repressor NrdR from Streptomyces clavuligerus.